The primary structure comprises 142 residues: Large ribosomal subunit protein uL11 (142 aa).

It belongs to the universal ribosomal protein uL11 family. In terms of assembly, part of the ribosomal stalk of the 50S ribosomal subunit. Interacts with L10 and the large rRNA to form the base of the stalk. L10 forms an elongated spine to which L12 dimers bind in a sequential fashion forming a multimeric L10(L12)X complex. Post-translationally, one or more lysine residues are methylated.

In terms of biological role, forms part of the ribosomal stalk which helps the ribosome interact with GTP-bound translation factors. This Shewanella sp. (strain W3-18-1) protein is Large ribosomal subunit protein uL11.